A 248-amino-acid chain; its full sequence is Ribosomal RNA small subunit methyltransferase J (248 aa).

Residues 98 to 99, 114 to 115, 150 to 151, and Asp-168 contribute to the S-adenosyl-L-methionine site; these read RD, ER, and SS.

It belongs to the methyltransferase superfamily. RsmJ family.

It is found in the cytoplasm. The catalysed reaction is guanosine(1516) in 16S rRNA + S-adenosyl-L-methionine = N(2)-methylguanosine(1516) in 16S rRNA + S-adenosyl-L-homocysteine + H(+). In terms of biological role, specifically methylates the guanosine in position 1516 of 16S rRNA. The protein is Ribosomal RNA small subunit methyltransferase J of Shewanella amazonensis (strain ATCC BAA-1098 / SB2B).